Reading from the N-terminus, the 301-residue chain is Protein FdhE homolog (301 aa).

This sequence belongs to the FdhE family.

The protein resides in the cytoplasm. Functionally, necessary for formate dehydrogenase activity. The chain is Protein FdhE homolog from Shewanella baltica (strain OS195).